We begin with the raw amino-acid sequence, 191 residues long: HTH-type transcriptional regulator SAR0097 (191 aa).

The HTH tetR-type domain occupies 12-74 (AEYNQQIILT…AIMDKKVDQM (63 aa)). A DNA-binding region (H-T-H motif) is located at residues 37-56 (KMSDIAKISGVGVGTLYRHF).

The chain is HTH-type transcriptional regulator SAR0097 from Staphylococcus aureus (strain MRSA252).